We begin with the raw amino-acid sequence, 268 residues long: Undecaprenyl-diphosphatase (268 aa).

8 helical membrane passes run 1-21 (MSLIYLVVLALVQGITEFLPI), 39-59 (QGPLIDVMAHAGSLLAVLVYF), 85-105 (ALLVAASMPPIIIVAGALVAF), 110-130 (ALRSPRVIAIATLAFALPLWL), 144-164 (MSFKHAALIGIAQLFALIPGA), 187-207 (FSMLMAIPVIAAFGLVSLIEL), 221-241 (DGLIVAGLSFVTAWAAIAVLM), and 247-267 (IGFLPFALYRVGLGLALLVFF).

The protein belongs to the UppP family.

It is found in the cell inner membrane. The catalysed reaction is di-trans,octa-cis-undecaprenyl diphosphate + H2O = di-trans,octa-cis-undecaprenyl phosphate + phosphate + H(+). Its function is as follows. Catalyzes the dephosphorylation of undecaprenyl diphosphate (UPP). Confers resistance to bacitracin. The chain is Undecaprenyl-diphosphatase from Maricaulis maris (strain MCS10) (Caulobacter maris).